The following is a 141-amino-acid chain: Nucleoside diphosphate kinase (141 aa).

ATP contacts are provided by K11, F59, R87, T93, R104, and N114. Residue H117 is the Pros-phosphohistidine intermediate of the active site.

This sequence belongs to the NDK family. In terms of assembly, homotetramer. Requires Mg(2+) as cofactor.

Its subcellular location is the cytoplasm. The catalysed reaction is a 2'-deoxyribonucleoside 5'-diphosphate + ATP = a 2'-deoxyribonucleoside 5'-triphosphate + ADP. The enzyme catalyses a ribonucleoside 5'-diphosphate + ATP = a ribonucleoside 5'-triphosphate + ADP. Functionally, major role in the synthesis of nucleoside triphosphates other than ATP. The ATP gamma phosphate is transferred to the NDP beta phosphate via a ping-pong mechanism, using a phosphorylated active-site intermediate. In Variovorax paradoxus (strain S110), this protein is Nucleoside diphosphate kinase.